Here is a 140-residue protein sequence, read N- to C-terminus: Small ribosomal subunit protein uS12 (140 aa).

2 disordered regions span residues 36–56 (TYNP…MTPK) and 117–140 (TSGV…EKKE).

Belongs to the universal ribosomal protein uS12 family. As to quaternary structure, part of the 30S ribosomal subunit. Contacts proteins S8 and S17. May interact with IF1 in the 30S initiation complex.

With S4 and S5 plays an important role in translational accuracy. In terms of biological role, interacts with and stabilizes bases of the 16S rRNA that are involved in tRNA selection in the A site and with the mRNA backbone. Located at the interface of the 30S and 50S subunits, it traverses the body of the 30S subunit contacting proteins on the other side and probably holding the rRNA structure together. The combined cluster of proteins S8, S12 and S17 appears to hold together the shoulder and platform of the 30S subunit. The sequence is that of Small ribosomal subunit protein uS12 from Malacoplasma penetrans (strain HF-2) (Mycoplasma penetrans).